The primary structure comprises 455 residues: 1,4-beta-D-glucan cellobiohydrolase C (455 aa).

The N-terminal stretch at 1–19 (MHYSASGLALAFLLPAIQA) is a signal peptide. The CBM1 domain maps to 20–55 (QQTLYGQCGGSGWTGATSCVAGAACSTLNQWYAQCL). 2 disulfide bridges follow: cysteine 27-cysteine 44 and cysteine 38-cysteine 54. The tract at residues 59–92 (TTTSTTLTTTTSSVTTTSNPGSTTTTSSVTVTAT) is thr-rich linker. The interval 66–86 (TTTTSSVTTTSNPGSTTTTSS) is disordered. Residues 93 to 450 (ASGNPFSGYQ…QAYFVQLLQN (358 aa)) form a catalytic region. Aspartate 185 is an active-site residue. Intrachain disulfides connect cysteine 186–cysteine 245 and cysteine 377–cysteine 424. The active-site Proton donor is the aspartate 231. The active-site Nucleophile is the aspartate 410.

It belongs to the glycosyl hydrolase 6 (cellulase B) family.

It localises to the secreted. It carries out the reaction Hydrolysis of (1-&gt;4)-beta-D-glucosidic linkages in cellulose and cellotetraose, releasing cellobiose from the non-reducing ends of the chains.. The biological conversion of cellulose to glucose generally requires three types of hydrolytic enzymes: (1) Endoglucanases which cut internal beta-1,4-glucosidic bonds; (2) Exocellobiohydrolases that cut the disaccharide cellobiose from the non-reducing end of the cellulose polymer chain; (3) Beta-1,4-glucosidases which hydrolyze the cellobiose and other short cello-oligosaccharides to glucose. Active against carboxymethylcellulose, beta-glucan and lichenan. This chain is 1,4-beta-D-glucan cellobiohydrolase C (cbhC), found in Emericella nidulans (strain FGSC A4 / ATCC 38163 / CBS 112.46 / NRRL 194 / M139) (Aspergillus nidulans).